The primary structure comprises 281 residues: Large ribosomal subunit protein uL2 (281 aa).

The span at Asp-27–Lys-38 shows a compositional bias: basic and acidic residues. 2 disordered regions span residues Asp-27 to Lys-59 and Ala-225 to Gln-281. A compositionally biased stretch (basic residues) spans Val-45–Lys-59.

The protein belongs to the universal ribosomal protein uL2 family. As to quaternary structure, part of the 50S ribosomal subunit. Forms a bridge to the 30S subunit in the 70S ribosome.

Its function is as follows. One of the primary rRNA binding proteins. Required for association of the 30S and 50S subunits to form the 70S ribosome, for tRNA binding and peptide bond formation. It has been suggested to have peptidyltransferase activity; this is somewhat controversial. Makes several contacts with the 16S rRNA in the 70S ribosome. The sequence is that of Large ribosomal subunit protein uL2 from Myxococcus xanthus (strain DK1622).